Here is a 37-residue protein sequence, read N- to C-terminus: Large ribosomal subunit protein bL36 (37 aa).

Belongs to the bacterial ribosomal protein bL36 family.

The chain is Large ribosomal subunit protein bL36 from Gloeothece citriformis (strain PCC 7424) (Cyanothece sp. (strain PCC 7424)).